The primary structure comprises 225 residues: Uracil phosphoribosyltransferase (225 aa).

36 to 40 (KGLVR) contributes to the GTP binding site. 5-phospho-alpha-D-ribose 1-diphosphate is bound by residues Arg-86, Arg-111, and 145-153 (DPMLATGST). Residues Ile-210 and 215–217 (GDA) each bind uracil. Asp-216 lines the 5-phospho-alpha-D-ribose 1-diphosphate pocket.

Belongs to the UPRTase family. Mg(2+) serves as cofactor.

It carries out the reaction UMP + diphosphate = 5-phospho-alpha-D-ribose 1-diphosphate + uracil. The protein operates within pyrimidine metabolism; UMP biosynthesis via salvage pathway; UMP from uracil: step 1/1. Its activity is regulated as follows. Allosterically activated by GTP. Functionally, catalyzes the conversion of uracil and 5-phospho-alpha-D-ribose 1-diphosphate (PRPP) to UMP and diphosphate. The chain is Uracil phosphoribosyltransferase from Haloarcula marismortui (strain ATCC 43049 / DSM 3752 / JCM 8966 / VKM B-1809) (Halobacterium marismortui).